An 858-amino-acid polypeptide reads, in one-letter code: MFGFLFKKIFGSKNDRYLRRLRSQVQSINALEPQMQELADEDFAARILQYKKAVQEDGQSLDALLPEVFALVREASRRVLGMRHYDMQLIGGMVLHKGKIAEMKTGEGKTLVATLPVVLNALSGKGVHVVTVNDYLAKRDAAWMGQLYGFLGLSTGVIVHGLDDDERKQQYESDITYGTNNEFGFDYLRDNMKFYGHQLVQRGHNYAIVDEVDSILIDEARTPLIISGASDESVGMYRIVDEVVCKLRPEHYTVDEKARTAMLTDEGVAYCEEMLKLDNLFDPANITAQHHVLQSLKAHQVFKRDVDYIVQDDQVVIVDEFTGRLMAGRRYSDGLHQALEAKEGVTIAAENQTLASITFQNYFRLYDKLSGMTGTADTEAVEFHQIYNLEVISIPPNRPMQRKDYPDLIYRSRQEKFDAIVEAITELHKNRQPVLVGTISIETSEMLSHRLSKLGVPHNVLNAKQHEKEAEIVAQAGQPGKVTIATNMAGRGTDIVLGEGVVDLGGLHILGTERHESRRIDNQLRGRSGRQGDPGSSRFYLSLEDDLMRLFGSDRIKGLMEKLGLRDGEAIENAMVTRAVEGAQKRVEAHHFEVRKTLLDYDNVMNQQREVIYALRRELMVEEDLDPVMDEFMNDVLDDVYSTLDGVPVDDHNGLREAAFARLRDVFNLDRVLPENAHLPEREECEPLIRKVLEELRSETGDSYRDIQRYFMLEELDRCWKEHLRNMDALRDGIGLRGYGQRDPKLEYKREGFEMFQAMLFQIRENVFRALSRVRVAPAETAPVEAIEIAPETEEAQGQPLAREYRHKEDRGQLSYSGGGNAEDARNTPAKAAPRIGRNDPCPCGSGRKYKKCCGADK.

Residues Q88, 106-110 (GEGKT), and D494 each bind ATP. The disordered stretch occupies residues 808 to 848 (KEDRGQLSYSGGGNAEDARNTPAKAAPRIGRNDPCPCGSGR). Zn(2+) contacts are provided by C842, C844, C853, and C854.

The protein belongs to the SecA family. As to quaternary structure, monomer and homodimer. Part of the essential Sec protein translocation apparatus which comprises SecA, SecYEG and auxiliary proteins SecDF-YajC and YidC. Requires Zn(2+) as cofactor.

The protein resides in the cell inner membrane. It localises to the cytoplasm. The catalysed reaction is ATP + H2O + cellular proteinSide 1 = ADP + phosphate + cellular proteinSide 2.. Its function is as follows. Part of the Sec protein translocase complex. Interacts with the SecYEG preprotein conducting channel. Has a central role in coupling the hydrolysis of ATP to the transfer of proteins into and across the cell membrane, serving as an ATP-driven molecular motor driving the stepwise translocation of polypeptide chains across the membrane. The polypeptide is Protein translocase subunit SecA (Desulfovibrio desulfuricans (strain ATCC 27774 / DSM 6949 / MB)).